We begin with the raw amino-acid sequence, 483 residues long: Glycogen synthase (483 aa).

Lysine 15 lines the ADP-alpha-D-glucose pocket.

Belongs to the glycosyltransferase 1 family. Bacterial/plant glycogen synthase subfamily.

It carries out the reaction [(1-&gt;4)-alpha-D-glucosyl](n) + ADP-alpha-D-glucose = [(1-&gt;4)-alpha-D-glucosyl](n+1) + ADP + H(+). It participates in glycan biosynthesis; glycogen biosynthesis. Functionally, synthesizes alpha-1,4-glucan chains using ADP-glucose. This chain is Glycogen synthase, found in Exiguobacterium sibiricum (strain DSM 17290 / CCUG 55495 / CIP 109462 / JCM 13490 / 255-15).